A 493-amino-acid chain; its full sequence is UDP-glucose 6-dehydrogenase (493 aa).

NAD(+) contacts are provided by residues 11-16 (GAGYVG), aspartate 36, arginine 41, and 89-93 (VNTPT). The disordered stretch occupies residues 88–110 (SVNTPTKTYGMGKGRAADLKYIE). Lysine 107 carries the post-translational modification N6-acetyllysine. The tract at residues 129–135 (KSTVPVR) is allosteric switch region. 130 to 132 (STV) lines the NAD(+) pocket. Glutamate 161 acts as the Proton donor/acceptor in catalysis. Substrate-binding positions include 161–165 (EFLAE), 220–224 (KLAAN), arginine 260, and 267–273 (KASVGFG). Glutamate 165 contacts NAD(+). The active-site Proton donor/acceptor is the lysine 220. The Nucleophile role is filled by cysteine 276. NAD(+) is bound at residue 276 to 279 (CFQK). The tract at residues 321–325 (SLFNT) is important for formation of active hexamer structure. Position 338–339 (338–339 (FK)) interacts with substrate. Arginine 346 is an NAD(+) binding site. A substrate-binding site is contributed by arginine 442. A disordered region spans residues 466–493 (VSSKRIPYTPGEIPKFSLQDPPNKKPKV). A Phosphothreonine modification is found at threonine 474.

The protein belongs to the UDP-glucose/GDP-mannose dehydrogenase family. In terms of assembly, homohexamer.

It catalyses the reaction UDP-alpha-D-glucose + 2 NAD(+) + H2O = UDP-alpha-D-glucuronate + 2 NADH + 3 H(+). The protein operates within nucleotide-sugar biosynthesis; UDP-alpha-D-glucuronate biosynthesis; UDP-alpha-D-glucuronate from UDP-alpha-D-glucose: step 1/1. With respect to regulation, UDP-alpha-D-xylose (UDX) acts as a feedback inhibitor. It binds at the same site as the substrate, but functions as allosteric inhibitor by triggering a conformation change that disrupts the active hexameric ring structure and gives rise to an inactive, horseshoe-shaped hexamer. Its function is as follows. Catalyzes the formation of UDP-alpha-D-glucuronate, a constituent of complex glycosaminoglycans. Required for the biosynthesis of chondroitin sulfate and heparan sulfate. Required for embryonic development via its role in the biosynthesis of glycosaminoglycans. Required for proper brain and neuronal development. In Rattus norvegicus (Rat), this protein is UDP-glucose 6-dehydrogenase (Ugdh).